The sequence spans 242 residues: MKEAIDQFIQQKQLSKNSRLAYTYDLEQFLEQVGTINDTSLRLYQSSLQSLKLSVQKRKLSAVNQFLYFLYNQKYIEHYYKLNIPKDQKENSSQGSLLDLSVFWQESQVPQGRLIALLILENGLLPSEILSIKVADIQLDFQILSVEKAGQKRIVQLSSKLTEELSRMASGTYLFEKKGKPYSRQWAFRQLEAFLSEKGQAGLSAQSLREQYILRQLKDKRSLHDIARDLGLKSITTLEKYR.

The 71-residue stretch at 1–71 (MKEAIDQFIQ…AVNQFLYFLY (71 aa)) folds into the Core-binding (CB) domain. The region spanning 90–242 (ENSSQGSLLD…KSITTLEKYR (153 aa)) is the Tyr recombinase domain. Active-site residues include Lys-148 and Arg-209. The O-(3'-phospho-DNA)-tyrosine intermediate role is filled by Tyr-241.

Belongs to the 'phage' integrase family. XerD-like subfamily.

The protein localises to the cytoplasm. Putative tyrosine recombinase. Not involved in the cutting and rejoining of the recombining DNA molecules on dif(SL) site. The polypeptide is Tyrosine recombinase XerD-like (Streptococcus gordonii (strain Challis / ATCC 35105 / BCRC 15272 / CH1 / DL1 / V288)).